The following is a 292-amino-acid chain: Acetyl-coenzyme A carboxylase carboxyl transferase subunit beta (292 aa).

The CoA carboxyltransferase N-terminal domain maps to 23 to 292 (VWSKCTACGN…TEATEVSVNE (270 aa)). Zn(2+) is bound by residues cysteine 27, cysteine 30, cysteine 46, and cysteine 49. The C4-type zinc finger occupies 27–49 (CTACGNIIYKADLERSLNVCPKC).

It belongs to the AccD/PCCB family. Acetyl-CoA carboxylase is a heterohexamer composed of biotin carboxyl carrier protein (AccB), biotin carboxylase (AccC) and two subunits each of ACCase subunit alpha (AccA) and ACCase subunit beta (AccD). The cofactor is Zn(2+).

The protein resides in the cytoplasm. The enzyme catalyses N(6)-carboxybiotinyl-L-lysyl-[protein] + acetyl-CoA = N(6)-biotinyl-L-lysyl-[protein] + malonyl-CoA. It functions in the pathway lipid metabolism; malonyl-CoA biosynthesis; malonyl-CoA from acetyl-CoA: step 1/1. Its function is as follows. Component of the acetyl coenzyme A carboxylase (ACC) complex. Biotin carboxylase (BC) catalyzes the carboxylation of biotin on its carrier protein (BCCP) and then the CO(2) group is transferred by the transcarboxylase to acetyl-CoA to form malonyl-CoA. The sequence is that of Acetyl-coenzyme A carboxylase carboxyl transferase subunit beta from Idiomarina loihiensis (strain ATCC BAA-735 / DSM 15497 / L2-TR).